Reading from the N-terminus, the 445-residue chain is 3-phosphoshikimate 1-carboxyvinyltransferase (445 aa).

The tract at residues 1-20 (MSTSAAPTPLESRASGPLSG) is disordered. Residues Lys-28, Ser-29, and Arg-33 each coordinate 3-phosphoshikimate. Lys-28 serves as a coordination point for phosphoenolpyruvate. 2 residues coordinate phosphoenolpyruvate: Gly-101 and Arg-129. 3-phosphoshikimate contacts are provided by Ser-175, Gln-177, Asp-328, and Lys-355. Gln-177 is a binding site for phosphoenolpyruvate. The active-site Proton acceptor is the Asp-328. Phosphoenolpyruvate-binding residues include Arg-359 and Arg-402.

This sequence belongs to the EPSP synthase family. Monomer.

It localises to the cytoplasm. The enzyme catalyses 3-phosphoshikimate + phosphoenolpyruvate = 5-O-(1-carboxyvinyl)-3-phosphoshikimate + phosphate. It functions in the pathway metabolic intermediate biosynthesis; chorismate biosynthesis; chorismate from D-erythrose 4-phosphate and phosphoenolpyruvate: step 6/7. Its function is as follows. Catalyzes the transfer of the enolpyruvyl moiety of phosphoenolpyruvate (PEP) to the 5-hydroxyl of shikimate-3-phosphate (S3P) to produce enolpyruvyl shikimate-3-phosphate and inorganic phosphate. The polypeptide is 3-phosphoshikimate 1-carboxyvinyltransferase (Bradyrhizobium sp. (strain ORS 278)).